We begin with the raw amino-acid sequence, 316 residues long: Apolipoprotein E (316 aa).

The signal sequence occupies residues 1-18; that stretch reads MKVLWVALVVALLAGCQA. 8 tandem repeats follow at residues 79–100, 101–122, 123–144, 145–166, 167–188, 189–210, 211–232, and 233–254. Positions 79–254 are 8 X 22 AA approximate tandem repeats; it reads VLMEETMKEV…RLDKMRQQLE (176 aa). A Methionine sulfoxide modification is found at Met142. Ser146 carries the phosphoserine modification. The tract at residues 157–167 is LDL and other lipoprotein receptors binding; sequence HLRKLRKRLLR. Residue 161–164 participates in heparin binding; sequence LRKR. Positions 209-289 are lipid-binding and lipoprotein association; that stretch reads AATLSTQVGQ…SWFEPLVEDM (81 aa). The O-linked (GalNAc...) threonine glycan is linked to Thr211. Residue 228-235 participates in heparin binding; it reads RQKLHGRL. The segment at 265-316 is homooligomerization; it reads SQIRLQAEAFQARLRSWFEPLVEDMQRQWAGLVEKVQLALHLSPTSPPSENH. Residues 277–289 form a specificity for association with VLDL region; sequence RLRSWFEPLVEDM.

This sequence belongs to the apolipoprotein A1/A4/E family. In terms of assembly, homotetramer. May interact with ABCA1; functionally associated with ABCA1 in the biogenesis of HDLs. May interact with APP/A4 amyloid-beta peptide; the interaction is extremely stable in vitro but its physiological significance is unclear. May interact with MAPT. May interact with MAP2. In the cerebrospinal fluid, interacts with secreted SORL1. Interacts with PMEL; this allows the loading of PMEL luminal fragment on ILVs to induce fibril nucleation. In terms of processing, APOE exists as multiple glycosylated and sialylated glycoforms within cells and in plasma. The extent of glycosylation and sialylation are tissue and context specific. Glycated in plasma VLDL. Post-translationally, phosphorylated by FAM20C in the extracellular medium.

The protein localises to the secreted. The protein resides in the extracellular space. Its subcellular location is the extracellular matrix. It localises to the extracellular vesicle. It is found in the endosome. The protein localises to the multivesicular body. APOE is an apolipoprotein, a protein associating with lipid particles, that mainly functions in lipoprotein-mediated lipid transport between organs via the plasma and interstitial fluids. APOE is a core component of plasma lipoproteins and is involved in their production, conversion and clearance. Apolipoproteins are amphipathic molecules that interact both with lipids of the lipoprotein particle core and the aqueous environment of the plasma. As such, APOE associates with chylomicrons, chylomicron remnants, very low density lipoproteins (VLDL) and intermediate density lipoproteins (IDL) but shows a preferential binding to high-density lipoproteins (HDL). It also binds a wide range of cellular receptors including the LDL receptor/LDLR and the very low-density lipoprotein receptor/VLDLR that mediate the cellular uptake of the APOE-containing lipoprotein particles. Finally, APOE also has a heparin-binding activity and binds heparan-sulfate proteoglycans on the surface of cells, a property that supports the capture and the receptor-mediated uptake of APOE-containing lipoproteins by cells. In Ovis aries musimon (Mouflon), this protein is Apolipoprotein E (APOE).